The sequence spans 824 residues: Glycogen phosphorylase (824 aa).

An N6-(pyridoxal phosphate)lysine modification is found at Lys667.

It belongs to the glycogen phosphorylase family. The cofactor is pyridoxal 5'-phosphate.

It catalyses the reaction [(1-&gt;4)-alpha-D-glucosyl](n) + phosphate = [(1-&gt;4)-alpha-D-glucosyl](n-1) + alpha-D-glucose 1-phosphate. Functionally, phosphorylase is an important allosteric enzyme in carbohydrate metabolism. Enzymes from different sources differ in their regulatory mechanisms and in their natural substrates. However, all known phosphorylases share catalytic and structural properties. This chain is Glycogen phosphorylase (glgP), found in Chlamydia pneumoniae (Chlamydophila pneumoniae).